The following is a 194-amino-acid chain: Imidazoleglycerol-phosphate dehydratase (194 aa).

Belongs to the imidazoleglycerol-phosphate dehydratase family.

It is found in the cytoplasm. It carries out the reaction D-erythro-1-(imidazol-4-yl)glycerol 3-phosphate = 3-(imidazol-4-yl)-2-oxopropyl phosphate + H2O. It functions in the pathway amino-acid biosynthesis; L-histidine biosynthesis; L-histidine from 5-phospho-alpha-D-ribose 1-diphosphate: step 6/9. In Ruminiclostridium cellulolyticum (strain ATCC 35319 / DSM 5812 / JCM 6584 / H10) (Clostridium cellulolyticum), this protein is Imidazoleglycerol-phosphate dehydratase.